Here is a 278-residue protein sequence, read N- to C-terminus: Bifunctional protein FolD (278 aa).

NADP(+) contacts are provided by residues 165–167, S190, and T231; that span reads GRS.

It belongs to the tetrahydrofolate dehydrogenase/cyclohydrolase family. Homodimer.

The catalysed reaction is (6R)-5,10-methylene-5,6,7,8-tetrahydrofolate + NADP(+) = (6R)-5,10-methenyltetrahydrofolate + NADPH. It carries out the reaction (6R)-5,10-methenyltetrahydrofolate + H2O = (6R)-10-formyltetrahydrofolate + H(+). The protein operates within one-carbon metabolism; tetrahydrofolate interconversion. Its function is as follows. Catalyzes the oxidation of 5,10-methylenetetrahydrofolate to 5,10-methenyltetrahydrofolate and then the hydrolysis of 5,10-methenyltetrahydrofolate to 10-formyltetrahydrofolate. This Clostridium novyi (strain NT) protein is Bifunctional protein FolD.